A 398-amino-acid chain; its full sequence is Cathepsin D (398 aa).

The signal sequence occupies residues 1-20; the sequence is MAPRGLLVLLLLALVGPCAA. Residues 21-63 constitute a propeptide, activation peptide; sequence LIRIPLTKFTSTRRMLTEVGSEIPDMNAITQFLKFKLGFADLA. Residues 78–395 enclose the Peptidase A1 domain; sequence YYGEIGIGTP…DRDNDSVGFA (318 aa). Asp-96 is a catalytic residue. An intrachain disulfide couples Cys-109 to Cys-116. Asn-133 and Asn-251 each carry an N-linked (GlcNAc...) asparagine glycan. Cys-274 and Cys-278 are joined by a disulfide. The active site involves Asp-283. Cys-317 and Cys-354 form a disulfide bridge.

The protein belongs to the peptidase A1 family. As to quaternary structure, consists of a light chain and a heavy chain. Oocytic yolk, preovulatory follicles, liver.

The protein resides in the lysosome. It carries out the reaction Specificity similar to, but narrower than, that of pepsin A. Does not cleave the 4-Gln-|-His-5 bond in B chain of insulin.. Its function is as follows. Acid protease active in intracellular protein breakdown. In chicken it is a key enzyme for yolk formation as it is capable of catalyzing intra oocytic break down of protein components of both vitellogenin and VLDL. This Gallus gallus (Chicken) protein is Cathepsin D (CTSD).